We begin with the raw amino-acid sequence, 165 residues long: MSSTFSFDVVSKLDMQEFDNALNQAKKELQQRYDLKNTNSSIEFNQKDMQLTLESADEFSLKSVVDIIESKMIKRGISIKSLDFGKVEPASQKSVRQKISLKEGIDKENAKKITNAVKDMKLKVQASVQGEEVRISGKSKDELQTVMSALKEMDLPVPLQFTNYR.

Belongs to the YajQ family.

In terms of biological role, nucleotide-binding protein. This chain is Nucleotide-binding protein Ctha_0558, found in Chloroherpeton thalassium (strain ATCC 35110 / GB-78).